Consider the following 422-residue polypeptide: Mannose-1-phosphate guanylyltransferase regulatory subunit alpha-A (422 aa).

The substrate-binding domain stretch occupies residues 2-253 (LKAVILIGGP…DRFWSQIKSA (252 aa)). GDP-alpha-D-mannose is bound by residues glutamate 85 and glutamine 249. A hexapeptide repeat domain region spans residues 275–422 (LATNTEGGAK…NRSFKNQIIL (148 aa)). The segment at 358–386 (TPSDPNPNDPYAKIDSETLFRDGKLTPSI) is C-loop.

It belongs to the transferase hexapeptide repeat family. As to quaternary structure, component of the GMPPA-GMPPB mannose-1-phosphate guanylyltransferase complex composed of 4 gmppa subunits and 8 gmppb subunits; the complex is organized into three layers, a central layer made up of 2 gmppa dimers sandwiched between two layers each made up of 2 gmppb dimers.

It functions in the pathway nucleotide-sugar biosynthesis; GDP-alpha-D-mannose biosynthesis; GDP-alpha-D-mannose from alpha-D-mannose 1-phosphate (GTP route): step 1/1. Its function is as follows. Regulatory subunit of the GMPPA-GMPPB mannose-1-phosphate guanylyltransferase complex; reduces the catalytic activity of GMPPB when part of the complex. Mediates allosteric feedback inhibition of GMPPB catalytic activity upon binding GDP-alpha-D-mannose. Together with GMPPB regulates GDP-alpha-D-mannose levels. One of two paralogs (gmppaa and gmppab) that may have redundant functions. In Danio rerio (Zebrafish), this protein is Mannose-1-phosphate guanylyltransferase regulatory subunit alpha-A (gmppaa).